Reading from the N-terminus, the 278-residue chain is 4-deoxy-L-threo-5-hexosulose-uronate ketol-isomerase (278 aa).

Positions 196, 198, 203, and 245 each coordinate Zn(2+).

This sequence belongs to the KduI family. Zn(2+) serves as cofactor.

It carries out the reaction 5-dehydro-4-deoxy-D-glucuronate = 3-deoxy-D-glycero-2,5-hexodiulosonate. Its pathway is glycan metabolism; pectin degradation; 2-dehydro-3-deoxy-D-gluconate from pectin: step 4/5. Catalyzes the isomerization of 5-dehydro-4-deoxy-D-glucuronate to 3-deoxy-D-glycero-2,5-hexodiulosonate. In Burkholderia cenocepacia (strain ATCC BAA-245 / DSM 16553 / LMG 16656 / NCTC 13227 / J2315 / CF5610) (Burkholderia cepacia (strain J2315)), this protein is 4-deoxy-L-threo-5-hexosulose-uronate ketol-isomerase.